The primary structure comprises 3380 residues: Apolipophorins (3380 aa).

The signal sequence occupies residues 1-21 (MGTPPHIWFLLILAISSGGLS). The Vitellogenin domain maps to 40–646 (YQKGQTYTYS…SQSSYLPRSV (607 aa)). N-linked (GlcNAc...) asparagine glycans are attached at residues Asn132, Asn649, Asn969, Asn2174, Asn2851, and Asn3177. In terms of domain architecture, VWFD spans 2815-2979 (ATAILLNSHH…NAWKVDAQCA (165 aa)). The cysteines at positions 2839 and 2978 are disulfide-linked.

Cleaved into 2 chains by furin protease. However, prevention of cleavage does not impair its function. In terms of processing, N-glycosylated. Present in brain, hemolymph, fat body and eyes.

It localises to the secreted. Functionally, constitutes the major component of lipophorin, which mediates transport for various types of lipids in hemolymph. Acts by forming lipoprotein particles that bind lipoproteins and lipids. May be required for morphogens wingless (wg) and hedgehog (hh) function, possibly by acting as vehicles for the movement of wg and hh. The chain is Apolipophorins from Locusta migratoria (Migratory locust).